Reading from the N-terminus, the 439-residue chain is Glutamate-1-semialdehyde 2,1-aminomutase (439 aa).

N6-(pyridoxal phosphate)lysine is present on K279.

It belongs to the class-III pyridoxal-phosphate-dependent aminotransferase family. HemL subfamily. As to quaternary structure, homodimer. The cofactor is pyridoxal 5'-phosphate.

It is found in the cytoplasm. It catalyses the reaction (S)-4-amino-5-oxopentanoate = 5-aminolevulinate. The protein operates within porphyrin-containing compound metabolism; protoporphyrin-IX biosynthesis; 5-aminolevulinate from L-glutamyl-tRNA(Glu): step 2/2. The chain is Glutamate-1-semialdehyde 2,1-aminomutase from Rhodopirellula baltica (strain DSM 10527 / NCIMB 13988 / SH1).